We begin with the raw amino-acid sequence, 150 residues long: MEEPSEKVDPMKDPETPQKKDEEDALDDTDVLQPETLVKVMKKLTLNPGVKRSARRRSLRNRIAAVPVENKSEKIRREVQSAFPKRRVRTLLSVLKDPIAKMRRLVRIEQRQKRLEGNEFERDSEPFRCLCTFCHYQRWDPSENAKIGKN.

Residues 1-22 are compositionally biased toward basic and acidic residues; it reads MEEPSEKVDPMKDPETPQKKDE. A disordered region spans residues 1-32; that stretch reads MEEPSEKVDPMKDPETPQKKDEEDALDDTDVL. Residues 1-75 form a required for H3K9me2-binding region; it reads MEEPSEKVDP…VPVENKSEKI (75 aa). The required to exclude TET3 from the maternal pronucleus stretch occupies residues 76 to 150; sequence RREVQSAFPK…PSENAKIGKN (75 aa).

In terms of tissue distribution, expressed in the immature oocytes and in newborn ovaries. Subsequently detected in maturing oocytes and in preimplantation embryos. Expressed in pluripotent embryonic but not in differentiated somatic cells. Expressed in blastocysts, epiblasts, primordial germ cells, embryonic gonads and primitive spermatogonia. No expression is detected in adult testes.

Its subcellular location is the nucleus. It localises to the cytoplasm. In terms of biological role, primordial germ cell (PGCs)-specific protein involved in epigenetic chromatin reprogramming in the zygote following fertilization. In zygotes, DNA demethylation occurs selectively in the paternal pronucleus before the first cell division, while the adjacent maternal pronucleus and certain paternally-imprinted loci are protected from this process. Participates in protection of DNA methylation in the maternal pronucleus by preventing conversion of 5mC to 5hmC: specifically recognizes and binds histone H3 dimethylated at 'Lys-9' (H3K9me2) on maternal genome, and protects maternal genome from TET3-mediated conversion to 5hmC and subsequent DNA demethylation. Does not bind paternal chromatin, which is mainly packed into protamine and does not contain much H3K9me2 mark. Also protects imprinted loci that are marked with H3K9me2 in mature sperm from DNA demethylation in early embryogenesis. May be important for the totipotent/pluripotent states continuing through preimplantation development. Also involved in chromatin condensation in oocytogenesis. The chain is Developmental pluripotency-associated protein 3 (Dppa3) from Mus musculus (Mouse).